The chain runs to 219 residues: Capsid protein (219 aa).

Residues 5–29 form a nuclear localization signals region; the sequence is RRRRVVRRRKPVRRLRRRRRRFFKR.

It belongs to the circoviridae capsid protein family. As to quaternary structure, homomultimer. Assembles in the nucleus, presumably in an immature form, then migrates to the cytoplasm once assembled as mature virion. Interacts with Rep; this interaction relocates Rep into the nucleus.

It localises to the host nucleus. The protein localises to the virion. In terms of biological role, self-assembles to form the virion icosahedral capsid with a T=1 symmetry. This very small capsid (17-22 nm in diameter) allows the virus to be very stable in the environment and resistant to some disinfectants, including detergents. Essential for the initial attachment to heparan sulfate moieties and chondroitin sulfate B of the host cell surface proteoglycans. After attachment, the virus is endocytosed and traffics to the nucleus. The capsid protein binds and transports the viral genome and Rep across the nuclear envelope. This is Capsid protein (Cap) from Homo sapiens (Human).